The following is a 143-amino-acid chain: Hemoglobin subunit alpha (143 aa).

The Globin domain maps to 2-143 (VLSPADKTNV…VSTVLVSKYR (142 aa)). S4 is modified (phosphoserine). N6-succinyllysine is present on K8. T9 is subject to Phosphothreonine. K12 carries the N6-succinyllysine modification. An N6-acetyllysine; alternate modification is found at K17. K17 is subject to N6-succinyllysine; alternate. Phosphotyrosine is present on Y25. Position 36 is a phosphoserine (S36). K41 carries the post-translational modification N6-succinyllysine. S51 is modified (phosphoserine). H60 contributes to the O2 binding site. H89 contacts heme b. Phosphoserine is present on S104. T110 bears the Phosphothreonine mark. Position 126 is a phosphoserine (S126). A Phosphothreonine modification is found at T136. Position 140 is a phosphoserine (S140).

This sequence belongs to the globin family. Heterotetramer of two alpha chains and two beta chains. Red blood cells.

Involved in oxygen transport from the lung to the various peripheral tissues. Its function is as follows. Hemopressin acts as an antagonist peptide of the cannabinoid receptor CNR1. Hemopressin-binding efficiently blocks cannabinoid receptor CNR1 and subsequent signaling. This Pipistrellus abramus (Japanese pipistrelle) protein is Hemoglobin subunit alpha (HBA).